The sequence spans 274 residues: Dermonecrotic toxin LarSicTox-alphaIV1 (274 aa).

His5 is a catalytic residue. Residues Glu25 and Asp27 each contribute to the Mg(2+) site. His41 serves as the catalytic Nucleophile. Disulfide bonds link Cys45–Cys51 and Cys47–Cys192. Asp85 contributes to the Mg(2+) binding site.

This sequence belongs to the arthropod phospholipase D family. Class II subfamily. Mg(2+) serves as cofactor. In terms of tissue distribution, expressed by the venom gland.

It is found in the secreted. It catalyses the reaction an N-(acyl)-sphingosylphosphocholine = an N-(acyl)-sphingosyl-1,3-cyclic phosphate + choline. The catalysed reaction is an N-(acyl)-sphingosylphosphoethanolamine = an N-(acyl)-sphingosyl-1,3-cyclic phosphate + ethanolamine. It carries out the reaction a 1-acyl-sn-glycero-3-phosphocholine = a 1-acyl-sn-glycero-2,3-cyclic phosphate + choline. The enzyme catalyses a 1-acyl-sn-glycero-3-phosphoethanolamine = a 1-acyl-sn-glycero-2,3-cyclic phosphate + ethanolamine. Functionally, dermonecrotic toxins cleave the phosphodiester linkage between the phosphate and headgroup of certain phospholipids (sphingolipid and lysolipid substrates), forming an alcohol (often choline) and a cyclic phosphate. This toxin acts on sphingomyelin (SM). It may also act on ceramide phosphoethanolamine (CPE), lysophosphatidylcholine (LPC) and lysophosphatidylethanolamine (LPE), but not on lysophosphatidylserine (LPS), and lysophosphatidylglycerol (LPG). It acts by transphosphatidylation, releasing exclusively cyclic phosphate products as second products. Induces dermonecrosis, hemolysis, increased vascular permeability, edema, inflammatory response, and platelet aggregation. The polypeptide is Dermonecrotic toxin LarSicTox-alphaIV1 (Loxosceles arizonica (Arizona brown spider)).